The following is a 325-amino-acid chain: Probable isoaspartyl peptidase/L-asparaginase GA20639 (325 aa).

The active-site Nucleophile is threonine 184. Substrate is bound by residues 212-215 and 235-238; these read RIGD and TGHG.

The protein belongs to the Ntn-hydrolase family. As to quaternary structure, heterodimer of an alpha and beta chain produced by autocleavage. Cleaved into an alpha and beta chain by autocatalysis; this activates the enzyme. The N-terminal residue of the beta subunit is responsible for the nucleophile hydrolase activity.

It carries out the reaction L-asparagine + H2O = L-aspartate + NH4(+). The enzyme catalyses Cleavage of a beta-linked Asp residue from the N-terminus of a polypeptide.. Functionally, has both L-asparaginase and beta-aspartyl peptidase activity. Does not have aspartylglucosaminidase activity and is inactive toward GlcNAc-L-Asn. Likewise, has no activity toward glutamine. In Drosophila pseudoobscura pseudoobscura (Fruit fly), this protein is Probable isoaspartyl peptidase/L-asparaginase GA20639.